Reading from the N-terminus, the 316-residue chain is Glutathione synthetase (316 aa).

The ATP-grasp domain maps to 125 to 310; it reads KLFTAWFSDL…ITGMLMDAIE (186 aa). Arginine 256 carries an N-beta-linked (GlcNAc) arginine glycan. Positions 281 and 283 each coordinate Mg(2+).

The protein belongs to the prokaryotic GSH synthase family. Mg(2+) serves as cofactor. The cofactor is Mn(2+).

It catalyses the reaction gamma-L-glutamyl-L-cysteine + glycine + ATP = glutathione + ADP + phosphate + H(+). The protein operates within sulfur metabolism; glutathione biosynthesis; glutathione from L-cysteine and L-glutamate: step 2/2. The protein is Glutathione synthetase of Escherichia coli O127:H6 (strain E2348/69 / EPEC).